A 197-amino-acid polypeptide reads, in one-letter code: Sodium/potassium-transporting ATPase subunit beta-1-interacting protein 3 (197 aa).

The next 4 helical transmembrane spans lie at 2-22 (GCCT…VSAL), 35-55 (APIL…FGTI), 62-82 (IMVY…IICF), and 152-172 (VQIL…SISM).

It belongs to the NKAIN family. Interacts with ATP1B1.

The protein resides in the cell membrane. In Homo sapiens (Human), this protein is Sodium/potassium-transporting ATPase subunit beta-1-interacting protein 3 (NKAIN3).